The chain runs to 291 residues: MSCQAFTSADTFIPLNSDASATLPLIMHHSAAECLPVSNHATNVMSTATGLHYSVPSCHYGNQPSTYGVMAGSLTPCLYKFPDHTLSHGFPPIHQPLLAEDPTAADFKQELRRKSKLVEEPIDMDSPEIRELEKFANEFKVRRIKLGYTQTNVGEALAAVHGSEFSQTTICRFENLQLSFKNACKLKAILSKWLEEAEQVGALYNEKVGANERKRKRRTTISIAAKDALERHFGEQNKPSSQEIMRMAEELNLEKEVVRVWFCNRRQREKRVKTSLNQSLFSISKEHLECR.

A 9aaTAD motif is present at residues 5–13 (AFTSADTFI). In terms of domain architecture, POU-specific spans 124–198 (MDSPEIRELE…ILSKWLEEAE (75 aa)). The segment at residues 214 to 273 (KRKRRTTISIAAKDALERHFGEQNKPSSQEIMRMAEELNLEKEVVRVWFCNRRQREKRVK) is a DNA-binding region (homeobox).

It belongs to the POU transcription factor family. Class-1 subfamily. Interacts with PITX1. Interacts with LHX3. Interacts with ELK1.

It localises to the nucleus. Functionally, transcription factor involved in the specification of the lactotrope, somatotrope, and thyrotrope phenotypes in the developing anterior pituitary. Specifically binds to the consensus sequence 5'-TAAAT-3'. Activates growth hormone and prolactin genes. This is Pituitary-specific positive transcription factor 1 (POU1F1) from Homo sapiens (Human).